The chain runs to 665 residues: DNA mismatch repair protein MutL (665 aa).

It belongs to the DNA mismatch repair MutL/HexB family.

Functionally, this protein is involved in the repair of mismatches in DNA. It is required for dam-dependent methyl-directed DNA mismatch repair. May act as a 'molecular matchmaker', a protein that promotes the formation of a stable complex between two or more DNA-binding proteins in an ATP-dependent manner without itself being part of a final effector complex. This is DNA mismatch repair protein MutL from Acidobacterium capsulatum (strain ATCC 51196 / DSM 11244 / BCRC 80197 / JCM 7670 / NBRC 15755 / NCIMB 13165 / 161).